A 791-amino-acid chain; its full sequence is Leucine-rich repeat-containing protein SOG2 (791 aa).

The tract at residues 1–28 (MVATSSKRTLDPKEEHLPADKTSTNSSN) is disordered. Over residues 8-19 (RTLDPKEEHLPA) the composition is skewed to basic and acidic residues. LRR repeat units lie at residues 43–64 (SGTT…DVGY), 67–88 (NVER…FKRL), 90–111 (RLQY…LTQC), 113–134 (QLEI…ISSF), 138–159 (NIRV…KSIT), and 163–183 (KLSI…DQVQ). Thr-214 is modified (phosphothreonine). 2 disordered regions span residues 454–506 (ASKA…TPSA) and 534–569 (HTHG…PRQQ). Over residues 469-486 (SSSSITSGGGPAASTTST) the composition is skewed to low complexity. The segment covering 544-569 (NAISNGSSQTNMNEVKTTSDTIPRQQ) has biased composition (polar residues).

It is found in the cytoplasm. In terms of biological role, required for proper cell morphogenesis and cell separation after mitosis. Functions in the RAM (regulation of ACE2 activity and cellular morphogenesis) signaling network and is required for proper ACE2 localization and CBK1 kinase activity. This chain is Leucine-rich repeat-containing protein SOG2, found in Saccharomyces cerevisiae (strain ATCC 204508 / S288c) (Baker's yeast).